Here is a 463-residue protein sequence, read N- to C-terminus: ATP synthase subunit beta (463 aa).

ATP is bound at residue G152–T159.

This sequence belongs to the ATPase alpha/beta chains family. As to quaternary structure, F-type ATPases have 2 components, CF(1) - the catalytic core - and CF(0) - the membrane proton channel. CF(1) has five subunits: alpha(3), beta(3), gamma(1), delta(1), epsilon(1). CF(0) has three main subunits: a(1), b(2) and c(9-12). The alpha and beta chains form an alternating ring which encloses part of the gamma chain. CF(1) is attached to CF(0) by a central stalk formed by the gamma and epsilon chains, while a peripheral stalk is formed by the delta and b chains.

It is found in the cell inner membrane. The enzyme catalyses ATP + H2O + 4 H(+)(in) = ADP + phosphate + 5 H(+)(out). In terms of biological role, produces ATP from ADP in the presence of a proton gradient across the membrane. The catalytic sites are hosted primarily by the beta subunits. The sequence is that of ATP synthase subunit beta from Shewanella putrefaciens (strain CN-32 / ATCC BAA-453).